Reading from the N-terminus, the 142-residue chain is ATP synthase epsilon chain, chloroplastic (142 aa).

This sequence belongs to the ATPase epsilon chain family. As to quaternary structure, F-type ATPases have 2 components, CF(1) - the catalytic core - and CF(0) - the membrane proton channel. CF(1) has five subunits: alpha(3), beta(3), gamma(1), delta(1), epsilon(1). CF(0) has three main subunits: a, b and c.

It localises to the plastid. Its subcellular location is the chloroplast thylakoid membrane. Functionally, produces ATP from ADP in the presence of a proton gradient across the membrane. This Ostreococcus tauri protein is ATP synthase epsilon chain, chloroplastic.